We begin with the raw amino-acid sequence, 214 residues long: Quinolone resistance pentapeptide repeat protein QnrB96 (214 aa).

Pentapeptide repeat domains follow at residues 23–103 (STFH…SFMN) and 116–189 (ITNT…VRGV).

The protein belongs to the pentapeptide repeat protein family.

Its function is as follows. Confers reduced sensitivity to the fluoroquinolone antibiotic ciprofloxacin (five-fold increase in minimum inhibitory concentration) when expressed in E.coli. This chain is Quinolone resistance pentapeptide repeat protein QnrB96, found in Scandinavium goeteborgense.